The sequence spans 141 residues: Cholinesterase (141 aa).

Asn-39 carries an N-linked (GlcNAc...) asparagine glycan. 49–50 (GS) contributes to the substrate binding site. Ser-131 functions as the Acyl-ester intermediate in the catalytic mechanism. Phosphoserine is present on Ser-131.

This sequence belongs to the type-B carboxylesterase/lipase family. As to quaternary structure, homotetramer; disulfide-linked. Dimer of dimers. As to expression, present in most cells except erythrocytes.

The protein resides in the secreted. It catalyses the reaction an acylcholine + H2O = a carboxylate + choline + H(+). Its function is as follows. Esterase with broad substrate specificity. Contributes to the inactivation of the neurotransmitter acetylcholine. Can degrade neurotoxic organophosphate esters. The protein is Cholinesterase (BCHE) of Ovis aries (Sheep).